Reading from the N-terminus, the 861-residue chain is Leucine--tRNA ligase (861 aa).

Residues 42–52 carry the 'HIGH' region motif; sequence PYPSGKLHMGH. The short motif at 620–624 is the 'KMSKS' region element; it reads KMSKS. Residue K623 coordinates ATP.

The protein belongs to the class-I aminoacyl-tRNA synthetase family.

It localises to the cytoplasm. The catalysed reaction is tRNA(Leu) + L-leucine + ATP = L-leucyl-tRNA(Leu) + AMP + diphosphate. The protein is Leucine--tRNA ligase of Marinobacter nauticus (strain ATCC 700491 / DSM 11845 / VT8) (Marinobacter aquaeolei).